Reading from the N-terminus, the 378-residue chain is Tetraacyldisaccharide 4'-kinase (378 aa).

63–70 (AVGGAGKT) contacts ATP.

It belongs to the LpxK family.

The enzyme catalyses a lipid A disaccharide + ATP = a lipid IVA + ADP + H(+). Its pathway is glycolipid biosynthesis; lipid IV(A) biosynthesis; lipid IV(A) from (3R)-3-hydroxytetradecanoyl-[acyl-carrier-protein] and UDP-N-acetyl-alpha-D-glucosamine: step 6/6. Transfers the gamma-phosphate of ATP to the 4'-position of a tetraacyldisaccharide 1-phosphate intermediate (termed DS-1-P) to form tetraacyldisaccharide 1,4'-bis-phosphate (lipid IVA). This is Tetraacyldisaccharide 4'-kinase from Anaeromyxobacter sp. (strain K).